A 457-amino-acid chain; its full sequence is tRNA-2-methylthio-N(6)-dimethylallyladenosine synthase (457 aa).

An MTTase N-terminal domain is found at 3-120 (KKVYVKTFGC…LPQMIDARRT (118 aa)). Positions 12, 49, 83, 157, 161, and 164 each coordinate [4Fe-4S] cluster. Positions 143 to 377 (RVEGPTAFVS…QATIEENVAR (235 aa)) constitute a Radical SAM core domain. The 68-residue stretch at 380–447 (QSMVGKVERI…PHSLRGELVL (68 aa)) folds into the TRAM domain.

It belongs to the methylthiotransferase family. MiaB subfamily. In terms of assembly, monomer. [4Fe-4S] cluster serves as cofactor.

It is found in the cytoplasm. It catalyses the reaction N(6)-dimethylallyladenosine(37) in tRNA + (sulfur carrier)-SH + AH2 + 2 S-adenosyl-L-methionine = 2-methylsulfanyl-N(6)-dimethylallyladenosine(37) in tRNA + (sulfur carrier)-H + 5'-deoxyadenosine + L-methionine + A + S-adenosyl-L-homocysteine + 2 H(+). In terms of biological role, catalyzes the methylthiolation of N6-(dimethylallyl)adenosine (i(6)A), leading to the formation of 2-methylthio-N6-(dimethylallyl)adenosine (ms(2)i(6)A) at position 37 in tRNAs that read codons beginning with uridine. The protein is tRNA-2-methylthio-N(6)-dimethylallyladenosine synthase of Burkholderia multivorans (strain ATCC 17616 / 249).